A 153-amino-acid chain; its full sequence is Protein SprT-like (153 aa).

In terms of domain architecture, SprT-like spans 6–148; it reads LQQLTEQLSL…CGKCGGKIKE (143 aa). Residue His-67 coordinates Zn(2+). Glu-68 is a catalytic residue. His-71 contacts Zn(2+).

Belongs to the SprT family. It depends on Zn(2+) as a cofactor.

It localises to the cytoplasm. The chain is Protein SprT-like from Bacillus licheniformis (strain ATCC 14580 / DSM 13 / JCM 2505 / CCUG 7422 / NBRC 12200 / NCIMB 9375 / NCTC 10341 / NRRL NRS-1264 / Gibson 46).